The following is a 220-amino-acid chain: Demethylmenaquinone methyltransferase (220 aa).

Residues threonine 47, aspartate 67, and 93 to 94 (DA) contribute to the S-adenosyl-L-methionine site.

The protein belongs to the class I-like SAM-binding methyltransferase superfamily. MenG/UbiE family.

The enzyme catalyses a 2-demethylmenaquinol + S-adenosyl-L-methionine = a menaquinol + S-adenosyl-L-homocysteine + H(+). It participates in quinol/quinone metabolism; menaquinone biosynthesis; menaquinol from 1,4-dihydroxy-2-naphthoate: step 2/2. Its function is as follows. Methyltransferase required for the conversion of demethylmenaquinol (DMKH2) to menaquinol (MKH2). The polypeptide is Demethylmenaquinone methyltransferase (Thermus thermophilus (strain ATCC BAA-163 / DSM 7039 / HB27)).